Reading from the N-terminus, the 1846-residue chain is Brefeldin A-inhibited guanine nucleotide-exchange protein 1 (1846 aa).

A DCB; DCB:DCB domain and DCB:HUS domain interaction region spans residues 2–224; it reads YEGKKTKNMF…QEAKQMERER (223 aa). Serine 52 is modified (phosphoserine). Disordered regions lie at residues 217–248, 264–302, and 347–410; these read AKQMERERHRQQHHLLQSPVSHHEPESPHLRY, DLDPQTHDVDKSLQDDIEPENGSDISSAENEQTEADQAT, and VSAS…SPGA. Residues 267–277 are compositionally biased toward basic and acidic residues; it reads PQTHDVDKSLQ. Serine 286, serine 289, serine 290, serine 394, and serine 407 each carry phosphoserine. Residues 391-406 show a composition bias toward polar residues; that stretch reads SVSSNDTQESGNSSGP. The segment at 554–574 is HUS; DCB:HUS domain interaction; it reads ADAQSVVDIYVNYDCDLNAAN. Residues 631 to 684 form a disordered region; it reads PNSQTTLGQEKPSEQEISEIKHPETINRYGSLNSLESTSSSGIGSYSTQMSGTD. Residues 641 to 655 show a composition bias toward basic and acidic residues; the sequence is KPSEQEISEIKHPET. The span at 661 to 681 shows a compositional bias: low complexity; that stretch reads SLNSLESTSSSGIGSYSTQMS. The SEC7 domain maps to 688–877; that stretch reads QFEVLKQQKE…SAIYNEIAGK (190 aa). The short motif at 708–712 is the Nuclear localization signal (NLS) element; it reads KKPKR. Serine 1076, serine 1563, and serine 1566 each carry phosphoserine. Positions 1571-1600 are disordered; the sequence is DSAQPRSSDNRQQAPLVSVSPASEEVSKGR. The segment covering 1574–1585 has biased composition (polar residues); it reads QPRSSDNRQQAP.

As to quaternary structure, homodimer. Interacts with ARFGEF2/BIG2; both proteins are probably part of the same or very similar macromolecular complexes. Interacts with FKBP2. Interacts with MYO9B. Interacts with PRKAR1A and PRKAR2A. Interacts with PPP1CC. Interacts with NCL, FBL, NUP62 and U3 small nucleolar RNA. Interacts with DPY30. Interacts with PDE3A. Interacts with KANK1. Interacts with TBC1D22A and TBC1D22B. Post-translationally, phosphorylated. In vitro phosphorylated by PKA reducing its GEF activity and dephosphorylated by phosphatase PP1.

It localises to the cytoplasm. The protein localises to the perinuclear region. The protein resides in the golgi apparatus. Its subcellular location is the trans-Golgi network. It is found in the nucleus. It localises to the nucleolus. The protein localises to the nucleus matrix. The protein resides in the membrane. With respect to regulation, inhibited by brefeldin A. Functionally, promotes guanine-nucleotide exchange on ARF1 and ARF3. Promotes the activation of ARF1/ARF3 through replacement of GDP with GTP. Involved in vesicular trafficking. Required for the maintenance of Golgi structure; the function may be independent of its GEF activity. Required for the maturation of integrin beta-1 in the Golgi. Involved in the establishment and persistence of cell polarity during directed cell movement in wound healing. Proposed to act as A kinase-anchoring protein (AKAP) and may mediate crosstalk between Arf and PKA pathways. Inhibits GAP activity of MYO9B probably through competitive RhoA binding. The function in the nucleus remains to be determined. The chain is Brefeldin A-inhibited guanine nucleotide-exchange protein 1 (Arfgef1) from Rattus norvegicus (Rat).